A 320-amino-acid chain; its full sequence is 3-hydroxybenzoate 6-hydroxylase 2 (320 aa).

Residues 1 to 25 (MRSTNTRSARSRPTKRSVNASATPT) are disordered. Over residues 16–25 (RSVNASATPT) the composition is skewed to polar residues.

Belongs to the 3-hydroxybenzoate 6-hydroxylase family. FAD serves as cofactor.

The catalysed reaction is 3-hydroxybenzoate + NADH + O2 + H(+) = 2,5-dihydroxybenzoate + NAD(+) + H2O. In terms of biological role, catalyzes the conversion of 3-hydroxybenzoate to gentisate. The polypeptide is 3-hydroxybenzoate 6-hydroxylase 2 (hbzD) (Aquipseudomonas alcaligenes (Pseudomonas alcaligenes)).